The chain runs to 270 residues: Chromo domain-containing protein cec-4 (270 aa).

Disordered regions lie at residues 1 to 24 and 143 to 229; these read MAKKTVEGEHGTPKTNFTKKETSK and KIAQ…KNDV. The Chromo domain occupies 87-147; that stretch reads YAVERVLAHR…HQEDLKIAQT (61 aa). 2 stretches are compositionally biased toward basic residues: residues 151 to 167 and 187 to 197; these read TPSKTPKKTPKSLKRRA and TPKQSTKKLKR. Over residues 205–229 the composition is skewed to basic and acidic residues; the sequence is LVEKSKKKAIPDLENHTLDQEKNDV.

Interacts with mono-, di- and tri-methylated 'Lys-9' residues on histone H3. Weakly interacts with methylated 'Lys-37' residues on histone H3.

Its subcellular location is the nucleus inner membrane. It is found in the membrane. Functionally, chromatin anchor protein which binds to methylated lysine residues on histone H3, thereby recruiting heterochromatin to the nuclear periphery, especially in embryonic cells, with a lesser role in differentiated cells. May be required for the correct positioning of chromatin and nucleoli in embryos. This chain is Chromo domain-containing protein cec-4, found in Caenorhabditis elegans.